A 461-amino-acid polypeptide reads, in one-letter code: Argininosuccinate lyase (461 aa).

This sequence belongs to the lyase 1 family. Argininosuccinate lyase subfamily.

Its subcellular location is the cytoplasm. It catalyses the reaction 2-(N(omega)-L-arginino)succinate = fumarate + L-arginine. It functions in the pathway amino-acid biosynthesis; L-arginine biosynthesis; L-arginine from L-ornithine and carbamoyl phosphate: step 3/3. The sequence is that of Argininosuccinate lyase from Chlorobium chlorochromatii (strain CaD3).